Here is a 390-residue protein sequence, read N- to C-terminus: Transforming growth factor beta-1 proprotein (390 aa).

Residues 1-29 form the signal peptide; the sequence is MPPSGLRLLPLLLPLPWLLVLTPGRPAAG. The interval 30–74 is straightjacket domain; that stretch reads LSTCKTIDMELVKRKRIEAIRGQILSKLRLASPPSQGEVPPGPLP. The arm domain stretch occupies residues 75–271; it reads EAVLALYNST…ATPLERAQHL (197 aa). N-linked (GlcNAc...) asparagine glycosylation is found at Asn82, Asn136, and Asn176. The segment at 226–252 is bowtie tail; the sequence is DSKDNKLHVEINGISPKRRGDLGTIHD. The Cell attachment site motif lies at 244 to 246; the sequence is RGD. Intrachain disulfides connect Cys285–Cys294, Cys293–Cys356, Cys322–Cys387, and Cys326–Cys389.

The protein belongs to the TGF-beta family. As to quaternary structure, homodimer; disulfide-linked. Interacts with the serine proteases, HTRA1 and HTRA3: the interaction with either inhibits TGFB1-mediated signaling and the HTRA protease activity is required for this inhibition. May interact with THSD4; this interaction may lead to sequestration by FBN1 microfibril assembly and attenuation of TGFB signaling. Interacts with CD109, DPT and ASPN. Interacts with EFEMP2. Interacts with TSKU; the interaction contributes to regulation of the hair cycle. Interacts with TGFBR3. In terms of assembly, homodimer; disulfide-linked. Interacts with transforming growth factor beta-1 (TGF-beta-1) chain; interaction is non-covalent and maintains TGF-beta-1 in a latent state; each latency-associated peptide (LAP) monomer interacts with TGF-beta-1 in the other monomer. Interacts with LTBP1; leading to regulation of TGF-beta-1 activation. Interacts with LRRC32/GARP; leading to regulation of TGF-beta-1 activation on the surface of activated regulatory T-cells (Tregs). Interacts with LRRC33/NRROS; leading to regulation of TGF-beta-1 activation in macrophages and microglia. Interacts (via cell attachment site) with integrins ITGAV and ITGB6 (ITGAV:ITGB6), leading to release of the active TGF-beta-1. Interacts with NREP; the interaction results in a decrease in TGFB1 autoinduction. Interacts with HSP90AB1; inhibits latent TGFB1 activation. Homodimer; disulfide-linked. Interacts with TGF-beta receptors (TGFBR1 and TGFBR2), leading to signal transduction. Transforming growth factor beta-1 proprotein: The precursor proprotein is cleaved in the Golgi apparatus by FURIN to form Transforming growth factor beta-1 (TGF-beta-1) and Latency-associated peptide (LAP) chains, which remain non-covalently linked, rendering TGF-beta-1 inactive. Post-translationally, N-glycosylated. Deglycosylation leads to activation of Transforming growth factor beta-1 (TGF-beta-1); mechanisms triggering deglycosylation-driven activation of TGF-beta-1 are however unclear. As to expression, expressed in cardiomyocytes. Weakly expressed in the mammary glands, with a slight increase of expression following onset of involution.

Its subcellular location is the secreted. It localises to the extracellular space. It is found in the extracellular matrix. Its function is as follows. Transforming growth factor beta-1 proprotein: Precursor of the Latency-associated peptide (LAP) and Transforming growth factor beta-1 (TGF-beta-1) chains, which constitute the regulatory and active subunit of TGF-beta-1, respectively. Functionally, required to maintain the Transforming growth factor beta-1 (TGF-beta-1) chain in a latent state during storage in extracellular matrix. Associates non-covalently with TGF-beta-1 and regulates its activation via interaction with 'milieu molecules', such as LTBP1, LRRC32/GARP and LRRC33/NRROS, that control activation of TGF-beta-1. Interaction with LRRC33/NRROS regulates activation of TGF-beta-1 in macrophages and microglia. Interaction with LRRC32/GARP controls activation of TGF-beta-1 on the surface of activated regulatory T-cells (Tregs). Interaction with integrins (ITGAV:ITGB6 or ITGAV:ITGB8) results in distortion of the Latency-associated peptide chain and subsequent release of the active TGF-beta-1. In terms of biological role, multifunctional protein that regulates the growth and differentiation of various cell types and is involved in various processes, such as normal development, immune function, microglia function and responses to neurodegeneration. Activation into mature form follows different steps: following cleavage of the proprotein in the Golgi apparatus, Latency-associated peptide (LAP) and Transforming growth factor beta-1 (TGF-beta-1) chains remain non-covalently linked rendering TGF-beta-1 inactive during storage in extracellular matrix. At the same time, LAP chain interacts with 'milieu molecules', such as LTBP1, LRRC32/GARP and LRRC33/NRROS that control activation of TGF-beta-1 and maintain it in a latent state during storage in extracellular milieus. TGF-beta-1 is released from LAP by integrins (ITGAV:ITGB6 or ITGAV:ITGB8): integrin-binding to LAP stabilizes an alternative conformation of the LAP bowtie tail and results in distortion of the LAP chain and subsequent release of the active TGF-beta-1. Once activated following release of LAP, TGF-beta-1 acts by binding to TGF-beta receptors (TGFBR1 and TGFBR2), which transduce signal. While expressed by many cells types, TGF-beta-1 only has a very localized range of action within cell environment thanks to fine regulation of its activation by Latency-associated peptide chain (LAP) and 'milieu molecules'. Plays an important role in bone remodeling: acts as a potent stimulator of osteoblastic bone formation, causing chemotaxis, proliferation and differentiation in committed osteoblasts. Can promote either T-helper 17 cells (Th17) or regulatory T-cells (Treg) lineage differentiation in a concentration-dependent manner. At high concentrations, leads to FOXP3-mediated suppression of RORC and down-regulation of IL-17 expression, favoring Treg cell development. At low concentrations in concert with IL-6 and IL-21, leads to expression of the IL-17 and IL-23 receptors, favoring differentiation to Th17 cells. Stimulates sustained production of collagen through the activation of CREB3L1 by regulated intramembrane proteolysis (RIP). Mediates SMAD2/3 activation by inducing its phosphorylation and subsequent translocation to the nucleus. Positively regulates odontoblastic differentiation in dental papilla cells, via promotion of IPO7-mediated translocation of phosphorylated SMAD2 to the nucleus and subsequent transcription of target genes. Can induce epithelial-to-mesenchymal transition (EMT) and cell migration in various cell types. The polypeptide is Transforming growth factor beta-1 proprotein (Mus musculus (Mouse)).